Consider the following 330-residue polypeptide: Small ribosomal subunit protein uS2 (330 aa).

This sequence belongs to the universal ribosomal protein uS2 family.

The sequence is that of Small ribosomal subunit protein uS2 from Bradyrhizobium sp. (strain BTAi1 / ATCC BAA-1182).